A 546-amino-acid polypeptide reads, in one-letter code: Chaperonin GroEL (546 aa).

Residues 30 to 33 (TLGP), Lys51, 87 to 91 (DGTTT), Gly415, 479 to 481 (NAA), and Asp495 each bind ATP.

Belongs to the chaperonin (HSP60) family. In terms of assembly, forms a cylinder of 14 subunits composed of two heptameric rings stacked back-to-back. Interacts with the co-chaperonin GroES.

The protein localises to the cytoplasm. The enzyme catalyses ATP + H2O + a folded polypeptide = ADP + phosphate + an unfolded polypeptide.. Its function is as follows. Together with its co-chaperonin GroES, plays an essential role in assisting protein folding. The GroEL-GroES system forms a nano-cage that allows encapsulation of the non-native substrate proteins and provides a physical environment optimized to promote and accelerate protein folding. The chain is Chaperonin GroEL from Pseudomonas putida (strain ATCC 700007 / DSM 6899 / JCM 31910 / BCRC 17059 / LMG 24140 / F1).